Reading from the N-terminus, the 264-residue chain is Teichoic acids export ATP-binding protein TagH (264 aa).

In terms of domain architecture, ABC transporter spans 24-243 (IKDALIPKNK…YEQFLKDFKK (220 aa)). Residue 57-64 (GINGSGKS) coordinates ATP.

It belongs to the ABC transporter superfamily. Teichoic acids exporter (TC 3.A.1.104.1) family. As to quaternary structure, the complex is composed of two ATP-binding proteins (TagH) and two transmembrane proteins (TagG).

The protein localises to the cell membrane. It catalyses the reaction ATP + H2O + teichoic acidSide 1 = ADP + phosphate + teichoic acidSide 2.. Its function is as follows. Part of the ABC transporter complex TagGH involved in teichoic acids export. Responsible for energy coupling to the transport system. This is Teichoic acids export ATP-binding protein TagH from Staphylococcus haemolyticus (strain JCSC1435).